The primary structure comprises 20 residues: T cell receptor alpha joining 42 (20 aa).

The segment at 1–20 (YGGSQGNLIFGKGTKLSVKP) is disordered.

Alpha-beta TR is a heterodimer composed of an alpha and beta chain; disulfide-linked. The alpha-beta TR is associated with the transmembrane signaling CD3 coreceptor proteins to form the TR-CD3 (TcR or TCR). The assembly of alpha-beta TR heterodimers with CD3 occurs in the endoplasmic reticulum where a single alpha-beta TR heterodimer associates with one CD3D-CD3E heterodimer, one CD3G-CD3E heterodimer and one CD247 homodimer forming a stable octameric structure. CD3D-CD3E and CD3G-CD3E heterodimers preferentially associate with TR alpha and TR beta chains, respectively. The association of the CD247 homodimer is the last step of TcR assembly in the endoplasmic reticulum and is required for transport to the cell surface.

Its subcellular location is the cell membrane. Functionally, j region of the variable domain of T cell receptor (TR) alpha chain that participates in the antigen recognition. Alpha-beta T cell receptors are antigen specific receptors which are essential to the immune response and are present on the cell surface of T lymphocytes. Recognize peptide-major histocompatibility (MH) (pMH) complexes that are displayed by antigen presenting cells (APC), a prerequisite for efficient T cell adaptive immunity against pathogens. Binding of alpha-beta TR to pMH complex initiates TR-CD3 clustering on the cell surface and intracellular activation of LCK that phosphorylates the ITAM motifs of CD3G, CD3D, CD3E and CD247 enabling the recruitment of ZAP70. In turn, ZAP70 phosphorylates LAT, which recruits numerous signaling molecules to form the LAT signalosome. The LAT signalosome propagates signal branching to three major signaling pathways, the calcium, the mitogen-activated protein kinase (MAPK) kinase and the nuclear factor NF-kappa-B (NF-kB) pathways, leading to the mobilization of transcription factors that are critical for gene expression and essential for T cell growth and differentiation. The T cell repertoire is generated in the thymus, by V-(D)-J rearrangement. This repertoire is then shaped by intrathymic selection events to generate a peripheral T cell pool of self-MH restricted, non-autoaggressive T cells. Post-thymic interaction of alpha-beta TR with the pMH complexes shapes TR structural and functional avidity. In Homo sapiens (Human), this protein is T cell receptor alpha joining 42.